Reading from the N-terminus, the 354-residue chain is uncharacterized protein (354 aa).

The span at Val309 to Gly326 shows a compositional bias: polar residues. A disordered region spans residues Val309–Glu333. Positions Gly326 to Asn353 form a coiled coil.

The protein resides in the virion. This is an uncharacterized protein from Acanthamoeba polyphaga (Amoeba).